The following is a 771-amino-acid chain: Polyribonucleotide nucleotidyltransferase (771 aa).

Mg(2+)-binding residues include aspartate 487 and aspartate 493. Positions 554 to 613 constitute a KH domain; that stretch reads PRIETMQIDKAKIRDVIGTGGKVIREIVATTGAKVDIDDEGLIKISSSDLDQIEAARKWI. Positions 623-691 constitute an S1 motif domain; the sequence is GKIYDGKVVN…PRGKVRLSMR (69 aa). The tract at residues 696–771 is disordered; the sequence is ETGAELEDTR…QGHVPDFLKD (76 aa). Positions 702–771 are enriched in basic and acidic residues; that stretch reads EDTRPAREPR…QGHVPDFLKD (70 aa).

The protein belongs to the polyribonucleotide nucleotidyltransferase family. Mg(2+) is required as a cofactor.

The protein localises to the cytoplasm. It carries out the reaction RNA(n+1) + phosphate = RNA(n) + a ribonucleoside 5'-diphosphate. In terms of biological role, involved in mRNA degradation. Catalyzes the phosphorolysis of single-stranded polyribonucleotides processively in the 3'- to 5'-direction. The sequence is that of Polyribonucleotide nucleotidyltransferase from Sphingopyxis alaskensis (strain DSM 13593 / LMG 18877 / RB2256) (Sphingomonas alaskensis).